Consider the following 451-residue polypeptide: Deoxyguanosinetriphosphate triphosphohydrolase-like protein (451 aa).

The region spanning 61–274 is the HD domain; that stretch reads RLTHSLEVAQ…MELADDIAYG (214 aa).

Belongs to the dGTPase family. Type 2 subfamily.

The protein is Deoxyguanosinetriphosphate triphosphohydrolase-like protein of Actinobacillus succinogenes (strain ATCC 55618 / DSM 22257 / CCUG 43843 / 130Z).